Consider the following 1755-residue polypeptide: Transposon Ty1-GR3 Gag-Pol polyprotein (1755 aa).

3 stretches are compositionally biased toward polar residues: residues 1-10 (MESQQLSNYP), 48-60 (TKANSQQTTTPAS), and 127-152 (QSQFPQYPSSVGTPLSTPSPESGNTF). Disordered regions lie at residues 1-93 (MESQ…MMTQ), 126-173 (PQSQ…RPPP), and 352-421 (GSRN…SKST). The segment covering 153–165 (TDSSSADSDMTST) has biased composition (low complexity). An RNA-binding region spans residues 299–401 (NNGIHINNKV…NSKSKTARAH (103 aa)). Residues 402 to 418 (NVSTSNNSPSTDNDSIS) are compositionally biased toward low complexity. The residue at position 416 (serine 416) is a Phosphoserine. Catalysis depends on aspartate 461, which acts as the For protease activity; shared with dimeric partner. The segment at 583–640 (NVHTSESTRKYPYPFIHRMLAHANAQTIRYSLKNNTITYFNESDVDWSSAIDYQCPDC) is integrase-type zinc finger-like. In terms of domain architecture, Integrase catalytic spans 660–835 (NSYEPFQYLH…AGLDISTLLP (176 aa)). Mg(2+)-binding residues include aspartate 671 and aspartate 736. The segment at 956–1172 (SKAVSPTDST…LGGIGDSNAY (217 aa)) is disordered. The segment covering 960-969 (SPTDSTPPST) has biased composition (low complexity). 2 stretches are compositionally biased toward polar residues: residues 1005–1015 (STPQISNIEST) and 1031–1043 (MSQSNTHESSYAS). Positions 1044–1053 (KSKDFRHSDS) are enriched in basic and acidic residues. 2 stretches are compositionally biased toward polar residues: residues 1054–1082 (YSDNETNHTNVPISSTGGTNNKTVPQTSE) and 1095–1106 (SIDTSSSESNSL). Residues 1178–1212 (KKRSLEDNETEIKVSRDTWNTKNMRSLEPPRSKKR) carry the Bipartite nuclear localization signal motif. The region spanning 1338–1476 (NNYYITQLDI…DILGLEIKYQ (139 aa)) is the Reverse transcriptase Ty1/copia-type domain. 6 residues coordinate Mg(2+): aspartate 1346, aspartate 1427, aspartate 1428, aspartate 1610, glutamate 1652, and aspartate 1685. One can recognise an RNase H Ty1/copia-type domain in the interval 1610 to 1752 (DASYGNQPYY…IKTFKLLTNK (143 aa)).

The capsid protein forms a homotrimer, from which the VLPs are assembled. The protease is a homodimer, whose active site consists of two apposed aspartic acid residues. Post-translationally, initially, virus-like particles (VLPs) are composed of the structural unprocessed proteins Gag and Gag-Pol, and also contain the host initiator methionine tRNA (tRNA(i)-Met) which serves as a primer for minus-strand DNA synthesis, and a dimer of genomic Ty RNA. Processing of the polyproteins occurs within the particle and proceeds by an ordered pathway, called maturation. First, the protease (PR) is released by autocatalytic cleavage of the Gag-Pol polyprotein yielding capsid protein p45 and a Pol-p154 precursor protein. This cleavage is a prerequisite for subsequent processing of Pol-p154 at the remaining sites to release the mature structural and catalytic proteins. Maturation takes place prior to the RT reaction and is required to produce transposition-competent VLPs.

It localises to the cytoplasm. The protein resides in the nucleus. It catalyses the reaction DNA(n) + a 2'-deoxyribonucleoside 5'-triphosphate = DNA(n+1) + diphosphate. The catalysed reaction is Endonucleolytic cleavage to 5'-phosphomonoester.. Capsid protein (CA) is the structural component of the virus-like particle (VLP), forming the shell that encapsulates the retrotransposons dimeric RNA genome. The particles are assembled from trimer-clustered units and there are holes in the capsid shells that allow for the diffusion of macromolecules. CA also has nucleocapsid-like chaperone activity, promoting primer tRNA(i)-Met annealing to the multipartite primer-binding site (PBS), dimerization of Ty1 RNA and initiation of reverse transcription. Functionally, the aspartyl protease (PR) mediates the proteolytic cleavages of the Gag and Gag-Pol polyproteins after assembly of the VLP. Its function is as follows. Reverse transcriptase/ribonuclease H (RT) is a multifunctional enzyme that catalyzes the conversion of the retro-elements RNA genome into dsDNA within the VLP. The enzyme displays a DNA polymerase activity that can copy either DNA or RNA templates, and a ribonuclease H (RNase H) activity that cleaves the RNA strand of RNA-DNA heteroduplexes during plus-strand synthesis and hydrolyzes RNA primers. The conversion leads to a linear dsDNA copy of the retrotransposon that includes long terminal repeats (LTRs) at both ends. In terms of biological role, integrase (IN) targets the VLP to the nucleus, where a subparticle preintegration complex (PIC) containing at least integrase and the newly synthesized dsDNA copy of the retrotransposon must transit the nuclear membrane. Once in the nucleus, integrase performs the integration of the dsDNA into the host genome. The sequence is that of Transposon Ty1-GR3 Gag-Pol polyprotein (TY1B-GR3) from Saccharomyces cerevisiae (strain ATCC 204508 / S288c) (Baker's yeast).